Reading from the N-terminus, the 598-residue chain is (-)-endo-fenchol synthase, chloroplastic (598 aa).

A chloroplast-targeting transit peptide spans 1–34 (MWSTISISMNVAILKKPLNFLHNSNNKASNPRCV). Positions 351, 355, 495, 499, and 503 each coordinate Mg(2+). The DDXXD motif motif lies at 351 to 355 (DDVYD).

This sequence belongs to the terpene synthase family. Mg(2+) is required as a cofactor. It depends on Mn(2+) as a cofactor.

The protein localises to the plastid. Its subcellular location is the chloroplast. The enzyme catalyses (2E)-geranyl diphosphate + H2O = (1S,2S,4R)-endo-fenchol + diphosphate. Its pathway is secondary metabolite biosynthesis; terpenoid biosynthesis. Functionally, monoterpene synthase that catalyzes the formation of fenchol from geranyl diphosphate. The chain is (-)-endo-fenchol synthase, chloroplastic (FES) from Ocimum basilicum (Sweet basil).